A 124-amino-acid chain; its full sequence is MADLAKIVDDLSALTVLEAAELSKLLEEKWGVSAAAPVAVAAAGGAAPAAAAEEKTEFDVVLADGGANKINVIKEVRAITGLGLKEAKDLVEGAPKAVKEGASKDEAEKIKAQLEAAGAKVELK.

It belongs to the bacterial ribosomal protein bL12 family. As to quaternary structure, homodimer. Part of the ribosomal stalk of the 50S ribosomal subunit. Forms a multimeric L10(L12)X complex, where L10 forms an elongated spine to which 2 to 4 L12 dimers bind in a sequential fashion. Binds GTP-bound translation factors.

Forms part of the ribosomal stalk which helps the ribosome interact with GTP-bound translation factors. Is thus essential for accurate translation. This is Large ribosomal subunit protein bL12 from Brucella anthropi (strain ATCC 49188 / DSM 6882 / CCUG 24695 / JCM 21032 / LMG 3331 / NBRC 15819 / NCTC 12168 / Alc 37) (Ochrobactrum anthropi).